Here is a 212-residue protein sequence, read N- to C-terminus: Soluble inorganic pyrophosphatase 1 (212 aa).

Lys-62 and Arg-76 together coordinate substrate. The active-site Proton donor is the Tyr-84. A substrate-binding site is contributed by Tyr-88. Asp-98, Asp-103, and Asp-135 together coordinate Mg(2+). Tyr-172 is a binding site for substrate.

This sequence belongs to the PPase family. As to quaternary structure, monomer. The cofactor is Mg(2+). In terms of tissue distribution, ubiquitous. Lower level of expression in ovary, stigma and pollen.

It localises to the cytoplasm. The catalysed reaction is diphosphate + H2O = 2 phosphate + H(+). With respect to regulation, inhibited by Zn(2+), Ca(2+), Ba(2+), Fe(2+), Co(2+), Cu(2+), Eu(2+), Eu(3+) and Mn(2+). In terms of biological role, catalyzes the irreversible hydrolysis of pyrophosphate (PPi) to phosphate. The MgPPi(2-) complex binds to the enzyme only after a free Mg(2+) ion has bound. No activity with glycerol-3-phosphate, glucose-6-phosphate, p-nitrophenylphosphate, ADP, NADP(+), NAD(+),NADH, NADPH or phosphoribosyl pyrophosphate as substrates. Controls the equilibrium of gluconeogenic reactions in the heterotrophic growth phase of early seedling establishment. Determinates the rate of cytosolic glycolysis, providing carbon for seed storage lipid accumulation. The polypeptide is Soluble inorganic pyrophosphatase 1 (Arabidopsis thaliana (Mouse-ear cress)).